We begin with the raw amino-acid sequence, 312 residues long: DNA-directed RNA polymerase subunit alpha (312 aa).

Residues 1-229 form an alpha N-terminal domain (alpha-NTD) region; it reads MLQYQIDRID…ELFQPLATVT (229 aa). The tract at residues 241–312 is alpha C-terminal domain (alpha-CTD); the sequence is SPEAQIPLEE…ISIPQSRTSV (72 aa).

Belongs to the RNA polymerase alpha chain family. As to quaternary structure, in cyanobacteria the RNAP catalytic core is composed of 2 alpha, 1 beta, 1 beta', 1 gamma and 1 omega subunit. When a sigma factor is associated with the core the holoenzyme is formed, which can initiate transcription.

The catalysed reaction is RNA(n) + a ribonucleoside 5'-triphosphate = RNA(n+1) + diphosphate. DNA-dependent RNA polymerase catalyzes the transcription of DNA into RNA using the four ribonucleoside triphosphates as substrates. In Prochlorococcus marinus (strain MIT 9215), this protein is DNA-directed RNA polymerase subunit alpha.